The chain runs to 2038 residues: Homeotic protein female sterile (2038 aa).

The Bromo 1 domain occupies 34-140; the sequence is RNTNQLQYLI…KVFLQKIESM (107 aa). Residues 145 to 284 form a disordered region; sequence LELEPVTAKG…TTAMAGGVGG (140 aa). Low complexity-rich tracts occupy residues 177–209 and 268–279; these read GSGT…SGLQ and PGSTNTTTTAMA. A helical transmembrane segment spans residues 330-350; that stretch reads AAVAAAAAAAAAAAAAAGGAA. Residues 396–432 are disordered; the sequence is KGVKRKADTTTPTANAFESPYTQMDSKSAKIATRRES. Over residues 404-421 the composition is skewed to polar residues; the sequence is TTTPTANAFESPYTQMDS. A helical transmembrane segment spans residues 451 to 471; that stretch reads VSGVPGLGGLVAGGVAGVAVA. Position 452 is a phosphoserine (serine 452). The region spanning 475–584 is the Bromo 2 domain; sequence EKLSDALKSC…DVFEMRYANI (110 aa). Disordered stretches follow at residues 590-655 and 677-735; these read ANAA…ERSA and EASA…SVPG. Residues 593-619 show a composition bias toward basic residues; that stretch reads AHHHGHGHGHGHGHGHGHGHGHGHGHG. Positions 636–649 are enriched in acidic residues; sequence SSEDSSDTENESNS. Residues 681–694 show a composition bias toward basic residues; that stretch reads KKKAKKKLKEKKKS. Residues 711–735 are compositionally biased toward gly residues; it reads TGGGANAGGAGGPGSGGHGSVSVPG. 3 consecutive transmembrane segments (helical) span residues 750-770, 790-810, and 816-830; these read LNAL…AGGV, MAGG…AAGA, and AGTL…AAAG. Disordered regions lie at residues 832 to 858, 891 to 956, 1016 to 1139, 1217 to 1260, 1384 to 1416, 1502 to 1530, 1580 to 1616, 1645 to 1728, 1745 to 1918, and 1957 to 2023; these read GGTT…SGAG, AGAA…SYDE, CLRK…GGNL, AVSA…ATVA, QPAG…QQQQ, MQQM…QQQH, IESM…PNAA, WSSL…VAQA, AAAA…SGAI, and MESG…GQID. Residues 874–894 form a helical membrane-spanning segment; sequence GAAGAAAGAGSVGGVGGAGAA. Over residues 910–927 the composition is skewed to gly residues; the sequence is GAGGGVGGANASAGGAGA. The NET domain maps to 942-1024; that stretch reads DSEEEDTAKP…SCLRKKTHKK (83 aa). Serine 943 carries the phosphoserine modification. A compositionally biased stretch (basic residues) spans 1017 to 1027; that stretch reads LRKKTHKKPSG. A compositionally biased stretch (basic and acidic residues) spans 1028–1046; sequence KSKDEQMAEKKQELEKRLQ. Residues 1079-1100 are compositionally biased toward low complexity; it reads SSSSSSSDSSSSSSSDSSSSDS. Composition is skewed to polar residues over residues 1121 to 1131 and 1222 to 1232; these read SNGSNVNNPSI and TGQQHNKNGPN. Residues 1645–1665 are compositionally biased toward low complexity; sequence WSSLASANSPQSHTSSSSSSS. Serine 1653 is modified (phosphoserine). The segment covering 1680–1708 has biased composition (basic and acidic residues); sequence KAKERDRLKLLEAAEKEKKNQKEAAEKEQ. Low complexity-rich tracts occupy residues 1716–1728 and 1745–1760; these read SSSS…VAQA and AAAA…PSGG. A helical membrane pass occupies residues 1731-1751; the sequence is IAAATAAAAVTLGAAAAAALA. Basic and acidic residues predominate over residues 1776–1791; the sequence is GDRDRDRDRERERERS. A compositionally biased stretch (low complexity) spans 1800-1813; it reads NGNNSSNSANSNGP. Composition is skewed to gly residues over residues 1814–1828 and 1835–1856; these read GSAG…GGSG and PNSG…GGGP. A compositionally biased stretch (low complexity) spans 1857–1884; the sequence is ALLNAGSNSNSGVGSGGAASSNSNSSVG. A compositionally biased stretch (gly residues) spans 1885–1915; the sequence is GIVGSGGPGSNSQGSSGGGGGGPASGGGMGS. A helical transmembrane segment spans residues 1939-1959; sequence VAAAVAAQAILAASPLGAMES. A phosphoserine mark is found at serine 1980 and serine 1988. Residues 1986 to 1997 are compositionally biased toward low complexity; that stretch reads QSSPAQQSPQDR. Residues 1998-2017 are compositionally biased toward basic and acidic residues; the sequence is AAAKRAEQRRAEQERRRREA.

It is found in the membrane. In terms of biological role, required maternally for proper expression of other homeotic genes involved in pattern formation, such as Ubx. The protein is Homeotic protein female sterile (fs(1)h) of Drosophila melanogaster (Fruit fly).